The following is a 186-amino-acid chain: Protein GrpE (186 aa).

The protein belongs to the GrpE family. As to quaternary structure, homodimer.

The protein localises to the cytoplasm. Participates actively in the response to hyperosmotic and heat shock by preventing the aggregation of stress-denatured proteins, in association with DnaK and GrpE. It is the nucleotide exchange factor for DnaK and may function as a thermosensor. Unfolded proteins bind initially to DnaJ; upon interaction with the DnaJ-bound protein, DnaK hydrolyzes its bound ATP, resulting in the formation of a stable complex. GrpE releases ADP from DnaK; ATP binding to DnaK triggers the release of the substrate protein, thus completing the reaction cycle. Several rounds of ATP-dependent interactions between DnaJ, DnaK and GrpE are required for fully efficient folding. The polypeptide is Protein GrpE (Novosphingobium aromaticivorans (strain ATCC 700278 / DSM 12444 / CCUG 56034 / CIP 105152 / NBRC 16084 / F199)).